The chain runs to 501 residues: Symplectin (501 aa).

The 268-residue stretch at 20–287 folds into the CN hydrolase domain; that stretch reads PKTDMETREE…SKLLVAEILP (268 aa). The Proton acceptor role is filled by E60. Residue K163 is the Proton donor of the active site. C196 (nucleophile) is an active-site residue. C390 carries the S-(coelenterazin-3a-yl)cysteine modification.

Belongs to the carbon-nitrogen hydrolase superfamily. BTD/VNN family. Photogenic gland (at protein level).

Functionally, monovalent ion-dependent bioluminescence photoprotein. Displays an emission peak at 470 nm (blue light). Trace amounts of monovalent ion trigger the intramolecular oxidation of the chromophore, didehydrocoelenterazine, with the emission of light. This is Symplectin from Sthenoteuthis oualaniensis (Purpleback flying squid).